We begin with the raw amino-acid sequence, 434 residues long: MEVRPKEGWNHADFVYCEDTEFAPGKPTVNADEEVGGPQICRVCGDKATGYHFNVMTCEGCKGFFRRAMKRNARLRCPFRKGACEITRKTRRQCQACRLRKCLESGMKKEMIMSDAAVEERRALIKRKKRERIGTQPPGVQGLTEEQRMMIRELMDAQMKTFDTTFSHFKNFRLPGVLSSGCEMPESLQAPSREEAAKWNQVRKDLWSVKVSVQLRGEDGSVWNYKPPADNGGKEIFSLLPHMADMSTYMFKGIINFAKVISYFRDLPIEDQISLLKGATFELCQLRFNTVFNAETGTWECGRLSYCLEDPAGGFQQLLLEPMLKFHYMLKKLQLHEEEYVLMQAISLFSPDRPGVVQHRVVDQLQEQYAITLKSYIECNRPQPAHRFLFLKIMAMLTELRSINAQHTQRLLRIQDIHPFATPLMQELFGITGS.

The nuclear receptor DNA-binding region spans 38-107 (PQICRVCGDK…RLRKCLESGM (70 aa)). 2 consecutive NR C4-type zinc fingers follow at residues 41-61 (CRVC…CEGC) and 77-102 (CPFR…LRKC). Positions 66-92 (RRAMKRNARLRCPFRKGACEITRKTRR) match the Bipartite nuclear localization signal motif. Residues 108–145 (KKEMIMSDAAVEERRALIKRKKRERIGTQPPGVQGLTE) are hinge. The NR LBD domain occupies 146 to 433 (EQRMMIRELM…LMQELFGITG (288 aa)). Hyperforin contacts are provided by residues serine 247, 285-288 (QLRF), and histidine 407.

Belongs to the nuclear hormone receptor family. NR1 subfamily. As to quaternary structure, heterodimer with RXRA. Interacts with NCOA1. Interacts (via domain NR LBD) with CRY1 and CRY2 in a ligand-dependent manner.

The protein localises to the nucleus. Nuclear receptor that binds and is activated by a variety of endogenous and xenobiotic compounds. Transcription factor that activates the transcription of multiple genes involved in the metabolism and secretion of potentially harmful xenobiotics, endogenous compounds and drugs. Response to specific ligands is species-specific, due to differences in the ligand-binding domain. Activated by naturally occurring steroids, such as pregnenolone and progesterone. Binds to a response element in the promoters of the CYP3A4 and ABCB1/MDR1 genes. The sequence is that of Nuclear receptor subfamily 1 group I member 2 (NR1I2) from Macaca mulatta (Rhesus macaque).